A 462-amino-acid polypeptide reads, in one-letter code: Fumarate hydratase class II (462 aa).

Residues 97–99 (SGT), 128–131 (HPND), 138–140 (STN), and Thr186 contribute to the substrate site. His187 functions as the Proton donor/acceptor in the catalytic mechanism. Ser317 is an active-site residue. Substrate contacts are provided by residues Ser318 and 323–325 (KVN).

The protein belongs to the class-II fumarase/aspartase family. Fumarase subfamily. As to quaternary structure, homotetramer.

The protein localises to the cytoplasm. The catalysed reaction is (S)-malate = fumarate + H2O. Its pathway is carbohydrate metabolism; tricarboxylic acid cycle; (S)-malate from fumarate: step 1/1. Its function is as follows. Involved in the TCA cycle. Catalyzes the stereospecific interconversion of fumarate to L-malate. The protein is Fumarate hydratase class II of Neisseria meningitidis serogroup A / serotype 4A (strain DSM 15465 / Z2491).